A 556-amino-acid polypeptide reads, in one-letter code: Transcription factor IIIB 70 kDa subunit (556 aa).

The TFIIB-type zinc-finger motif lies at 8–41; the sequence is SSRKCKNCGSTDFVRDISNTTNELICKVCGLVTE. Zn(2+) is bound by residues Cys12, Cys15, Cys33, and Cys36. 2 tandem repeats follow at residues 98–174 and 193–272. The interaction with TBP and with the Pol III subunit C34 stretch occupies residues 98–272; sequence LKAVSYALNI…EETLQQRLNE (175 aa). An interaction with TBP region spans residues 284 to 556; sequence KEFRDDETEV…DAINGLFGQK (273 aa). 2 disordered regions span residues 287–309 and 477–501; these read RDDETEVNEGERSAESKPPSFDK and ADLASGNTSLRKKRSKRTNRNQSSA. Basic and acidic residues predominate over residues 295 to 309; sequence EGERSAESKPPSFDK. Residues 486-495 are compositionally biased toward basic residues; that stretch reads LRKKRSKRTN.

This sequence belongs to the TFIIB family. In terms of assembly, TFIIIB comprises the TATA-binding protein (TBP), the B-related factor (BRF) and a 70 kDa polypeptide.

Its subcellular location is the nucleus. Its function is as follows. General activator of RNA polymerase III transcription. Interacts with TBP. Binds to Pol III subunit C34 and to the TAU135 component of TFIIIC. This Kluyveromyces lactis (strain ATCC 8585 / CBS 2359 / DSM 70799 / NBRC 1267 / NRRL Y-1140 / WM37) (Yeast) protein is Transcription factor IIIB 70 kDa subunit (TDS4).